The following is a 419-amino-acid chain: Tyrosine--tRNA ligase (419 aa).

Residue Tyr42 participates in L-tyrosine binding. Positions 47-56 (ATAPSLHVGS) match the 'HIGH' region motif. Positions 179 and 183 each coordinate L-tyrosine. A 'KMSKS' region motif is present at residues 239-243 (KMGKT). Lys242 is a binding site for ATP. The S4 RNA-binding domain maps to 353–418 (VVLAALFADA…GKKKIVLVKP (66 aa)).

It belongs to the class-I aminoacyl-tRNA synthetase family. TyrS type 1 subfamily. In terms of assembly, homodimer.

The protein localises to the cytoplasm. It carries out the reaction tRNA(Tyr) + L-tyrosine + ATP = L-tyrosyl-tRNA(Tyr) + AMP + diphosphate + H(+). Its function is as follows. Catalyzes the attachment of tyrosine to tRNA(Tyr) in a two-step reaction: tyrosine is first activated by ATP to form Tyr-AMP and then transferred to the acceptor end of tRNA(Tyr). In Caulobacter vibrioides (strain ATCC 19089 / CIP 103742 / CB 15) (Caulobacter crescentus), this protein is Tyrosine--tRNA ligase.